The primary structure comprises 390 residues: Mannitol-1-phosphate 5-dehydrogenase (390 aa).

7–18 is a binding site for NAD(+); it reads AVHFGGGNIGRG. Residue Lys-216 is part of the active site.

The protein belongs to the mannitol dehydrogenase family. Monomer.

It catalyses the reaction D-mannitol 1-phosphate + NAD(+) = beta-D-fructose 6-phosphate + NADH + H(+). In terms of biological role, catalyzes the NAD(H)-dependent interconversion of D-fructose 6-phosphate and D-mannitol 1-phosphate in the mannitol metabolic pathway. Has a strong preference for NADH over NADPH. The protein is Mannitol-1-phosphate 5-dehydrogenase of Alternaria alternata (Alternaria rot fungus).